A 70-amino-acid polypeptide reads, in one-letter code: DNA-directed RNA polymerases I, II, and III subunit rpabc5 (70 aa).

The Zn(2+) site is built by C7, C10, C44, and C45.

It belongs to the archaeal Rpo10/eukaryotic RPB10 RNA polymerase subunit family. As to quaternary structure, component of the RNA polymerase I (Pol I), RNA polymerase II (Pol II) and RNA polymerase III (Pol III) complexes.

The protein localises to the nucleus. In terms of biological role, DNA-dependent RNA polymerase catalyzes the transcription of DNA into RNA using the four ribonucleoside triphosphates as substrates. Common component of RNA polymerases I, II and III which synthesize ribosomal RNA precursors, mRNA precursors and many functional non-coding RNAs, and a small RNAs, such as 5S rRNA and tRNAs, respectively. Pol II is the central component of the basal RNA polymerase II transcription machinery. Pols are composed of mobile elements that move relative to each other. In Pol II, RBP10 is part of the core element with the central large cleft. The polypeptide is DNA-directed RNA polymerases I, II, and III subunit rpabc5 (polr2l) (Dictyostelium discoideum (Social amoeba)).